The sequence spans 114 residues: Large ribosomal subunit protein uL18 (114 aa).

It belongs to the universal ribosomal protein uL18 family. As to quaternary structure, part of the 50S ribosomal subunit; part of the 5S rRNA/L5/L18/L25 subcomplex. Contacts the 5S and 23S rRNAs.

Its function is as follows. This is one of the proteins that bind and probably mediate the attachment of the 5S RNA into the large ribosomal subunit, where it forms part of the central protuberance. The polypeptide is Large ribosomal subunit protein uL18 (Azobacteroides pseudotrichonymphae genomovar. CFP2).